The chain runs to 274 residues: Coiled-coil domain-containing protein 28A (274 aa).

The segment at 121–166 (VSKSTGFSNPASQSTSQRPKLKRVMKEKTKPQGGEGKGAQSTPIQH) is disordered. The segment covering 122–138 (SKSTGFSNPASQSTSQR) has biased composition (polar residues). Residues 234 to 263 (KRKTASDSNLDRLLSDLEELNSSIQKLHLA) adopt a coiled-coil conformation.

The sequence is that of Coiled-coil domain-containing protein 28A (CCDC28A) from Homo sapiens (Human).